Here is a 305-residue protein sequence, read N- to C-terminus: Tetraspanin-12 (305 aa).

At Met1–Cys12 the chain is on the cytoplasmic side. 2 S-palmitoyl cysteine lipidation sites follow: Cys9 and Cys12. Residues Leu13–Ala33 form a helical membrane-spanning segment. Over Trp34–Tyr59 the chain is Extracellular. Residues Phe60–Leu80 form a helical membrane-spanning segment. The Cytoplasmic segment spans residues Gly81 to Asn89. A lipid anchor (S-palmitoyl cysteine) is attached at Cys83. Residues Leu90 to Cys110 traverse the membrane as a helical segment. The Extracellular portion of the chain corresponds to Gly111–Arg224. A helical membrane pass occupies residues Phe225–Leu245. Over Trp246–Leu305 the chain is Cytoplasmic.

Belongs to the tetraspanin (TM4SF) family. In terms of assembly, component of a complex, at least composed of TSPAN12, FZD4 and norrin (NDP). In terms of processing, palmitoylated; required for interaction with ADAM10. The precise position of palmitoylated residues is unclear and occurs either on Cys-9, Cys-12 and/or Cys-83.

It is found in the cell membrane. Functionally, regulator of cell surface receptor signal transduction. Plays a central role in retinal vascularization by regulating norrin (NDP) signal transduction. Acts in concert with norrin (NDP) to promote FZD4 multimerization and subsequent activation of FZD4, leading to promote accumulation of beta-catenin (CTNNB1) and stimulate LEF/TCF-mediated transcriptional programs. Suprisingly, it only activates the norrin (NDP)-dependent activation of FZD4, while it does not activate the Wnt-dependent activation of FZD4, suggesting the existence of a Wnt-independent signaling that also promote accumulation the beta-catenin (CTNNB1). This Gallus gallus (Chicken) protein is Tetraspanin-12 (TSPAN12).